We begin with the raw amino-acid sequence, 132 residues long: Probable histone H2A.1 (132 aa).

A disordered region spans residues 1 to 22 (MAGRGKTLGSGSAKKATTRSSK).

This sequence belongs to the histone H2A family. As to quaternary structure, the nucleosome is a histone octamer containing two molecules each of H2A, H2B, H3 and H4 assembled in one H3-H4 heterotetramer and two H2A-H2B heterodimers. The octamer wraps approximately 147 bp of DNA. Not ubiquitinated. As to expression, low level of expression; mainly in roots. Found in the root cap cells and in non dividing tissues of the plant, including the root elongation and maturation zones and the leaf veins.

It is found in the nucleus. Its subcellular location is the chromosome. Functionally, core component of nucleosome. Nucleosomes wrap and compact DNA into chromatin, limiting DNA accessibility to the cellular machineries which require DNA as a template. Histones thereby play a central role in transcription regulation, DNA repair, DNA replication and chromosomal stability. DNA accessibility is regulated via a complex set of post-translational modifications of histones, also called histone code, and nucleosome remodeling. The protein is Probable histone H2A.1 of Arabidopsis thaliana (Mouse-ear cress).